Consider the following 79-residue polypeptide: Acyl carrier protein (79 aa).

The Carrier domain maps to 2–77 (SDIEARVKKI…LAIDYAKSHA (76 aa)). Ser-37 carries the post-translational modification O-(pantetheine 4'-phosphoryl)serine.

The protein belongs to the acyl carrier protein (ACP) family. Post-translationally, 4'-phosphopantetheine is transferred from CoA to a specific serine of apo-ACP by AcpS. This modification is essential for activity because fatty acids are bound in thioester linkage to the sulfhydryl of the prosthetic group.

It is found in the cytoplasm. It participates in lipid metabolism; fatty acid biosynthesis. Its function is as follows. Carrier of the growing fatty acid chain in fatty acid biosynthesis. This chain is Acyl carrier protein, found in Methylibium petroleiphilum (strain ATCC BAA-1232 / LMG 22953 / PM1).